A 452-amino-acid polypeptide reads, in one-letter code: tRNA modification GTPase MnmE (452 aa).

Residues arginine 22, glutamate 79, and lysine 119 each coordinate (6S)-5-formyl-5,6,7,8-tetrahydrofolate. One can recognise a TrmE-type G domain in the interval 215–375 (GMKVVIAGRP…LRQHLKQSMG (161 aa)). Asparagine 225 lines the K(+) pocket. GTP is bound by residues 225–230 (NAGKSS), 244–250 (TDIAGTT), 269–272 (DTAG), and 333–336 (NKAD). Position 229 (serine 229) interacts with Mg(2+). The K(+) site is built by threonine 244, isoleucine 246, and threonine 249. A Mg(2+)-binding site is contributed by threonine 250. (6S)-5-formyl-5,6,7,8-tetrahydrofolate is bound at residue lysine 452.

Belongs to the TRAFAC class TrmE-Era-EngA-EngB-Septin-like GTPase superfamily. TrmE GTPase family. In terms of assembly, homodimer. Heterotetramer of two MnmE and two MnmG subunits. K(+) serves as cofactor.

It is found in the cytoplasm. Exhibits a very high intrinsic GTPase hydrolysis rate. Involved in the addition of a carboxymethylaminomethyl (cmnm) group at the wobble position (U34) of certain tRNAs, forming tRNA-cmnm(5)s(2)U34. In Histophilus somni (strain 2336) (Haemophilus somnus), this protein is tRNA modification GTPase MnmE.